Here is a 368-residue protein sequence, read N- to C-terminus: Probable ubiquitin receptor RAD23a (368 aa).

Residues 1 to 77 (MKLTVKTLKG…GFLVVMLSKS (77 aa)) enclose the Ubiquitin-like domain. The span at 80 to 111 (ASSAGPSSTQPTSTTTSTISSTTLAAPSTTQS) shows a compositional bias: low complexity. The interval 80–136 (ASSAGPSSTQPTSTTTSTISSTTLAAPSTTQSIAVPASNSTPVQEQPTAQSDTYGQA) is disordered. A compositionally biased stretch (polar residues) spans 116-136 (ASNSTPVQEQPTAQSDTYGQA). One can recognise a UBA 1 domain in the interval 142–185 (SGSSIEQMVQQIMEMGGGSWDKETVTRALRAAYNNPERAVDYLY). Positions 202 to 222 (VGSGRELTAPPPSGGPNSSPL) are disordered. Residues 239 to 282 (GTLEFLRGNDQFQQLRSMVNSNPQILQPMLQELGKQNPQLLRLI) enclose the STI1 domain. A UBA 2 domain is found at 320–360 (VTPEEQESIERLEAMGFDRAIVIEAFLSCDRNEELAANYLL).

It belongs to the RAD23 family. As to quaternary structure, interacts with 'Lys-48'-linked polyubiquitin chains. Interacts with RPN10. In terms of tissue distribution, widely expressed in the whole plant.

It localises to the nucleus. It is found in the cytoplasm. Its function is as follows. May be involved in nucleotide excision repair. Binds and presumably selects ubiquitin-conjugates for destruction. Prefers multiubiquitin chains rather than single ubiquitins, with a binding affinity for 'Lys-48'-linked ubiquitin chains. Acts as a ubiquitin receptor that associates with the 26S proteasomal docking subunit RPN10 for the indirect recognition of ubiquitinated substrates of ubiquitin/26S proteasome-mediated proteolysis (UPP). Involved in UV tolerance in roots, specifically in dark conditions. The protein is Probable ubiquitin receptor RAD23a of Arabidopsis thaliana (Mouse-ear cress).